A 289-amino-acid polypeptide reads, in one-letter code: MLRDLFVKKKKYAAIPSEQVRKDVPDGVMTKCPECKKIMYTKELLKNLKVCVNCGYHHPMNAWERLDSILDEGSFREYDKEMVSLNPLEFPGYEEKLESDRKKTELNEAVVTGEGTIDDMLVVVAVMDSRFRMGSMGSVVGEKIARAVEKAYDLQVPFIIFTASGGARMQEGILSLMQMAKTSVALKKHSNAGGLFISVMTHPTTGGVSASFASLGDYNLAEPGALIGFAGRRVIEQTVREKLPEDFQTAEFLLDHGQLDAVVHRDDMRESLRKILEVHQGGGMAVWQS.

A CoA carboxyltransferase N-terminal domain is found at valine 28 to serine 289. Zn(2+) is bound by residues cysteine 32, cysteine 35, cysteine 51, and cysteine 54. The C4-type zinc-finger motif lies at cysteine 32–cysteine 54.

This sequence belongs to the AccD/PCCB family. Acetyl-CoA carboxylase is a heterohexamer composed of biotin carboxyl carrier protein (AccB), biotin carboxylase (AccC) and two subunits each of ACCase subunit alpha (AccA) and ACCase subunit beta (AccD). The cofactor is Zn(2+).

Its subcellular location is the cytoplasm. The enzyme catalyses N(6)-carboxybiotinyl-L-lysyl-[protein] + acetyl-CoA = N(6)-biotinyl-L-lysyl-[protein] + malonyl-CoA. It functions in the pathway lipid metabolism; malonyl-CoA biosynthesis; malonyl-CoA from acetyl-CoA: step 1/1. Its function is as follows. Component of the acetyl coenzyme A carboxylase (ACC) complex. Biotin carboxylase (BC) catalyzes the carboxylation of biotin on its carrier protein (BCCP) and then the CO(2) group is transferred by the transcarboxylase to acetyl-CoA to form malonyl-CoA. The sequence is that of Acetyl-coenzyme A carboxylase carboxyl transferase subunit beta from Bacillus cereus (strain G9842).